Here is a 423-residue protein sequence, read N- to C-terminus: Serine hydroxymethyltransferase (423 aa).

Residues leucine 126 and 130–132 contribute to the (6S)-5,6,7,8-tetrahydrofolate site; that span reads GHL. N6-(pyridoxal phosphate)lysine is present on lysine 235.

Belongs to the SHMT family. Homodimer. It depends on pyridoxal 5'-phosphate as a cofactor.

It localises to the cytoplasm. The catalysed reaction is (6R)-5,10-methylene-5,6,7,8-tetrahydrofolate + glycine + H2O = (6S)-5,6,7,8-tetrahydrofolate + L-serine. It participates in one-carbon metabolism; tetrahydrofolate interconversion. The protein operates within amino-acid biosynthesis; glycine biosynthesis; glycine from L-serine: step 1/1. Its function is as follows. Catalyzes the reversible interconversion of serine and glycine with tetrahydrofolate (THF) serving as the one-carbon carrier. This reaction serves as the major source of one-carbon groups required for the biosynthesis of purines, thymidylate, methionine, and other important biomolecules. Also exhibits THF-independent aldolase activity toward beta-hydroxyamino acids, producing glycine and aldehydes, via a retro-aldol mechanism. The chain is Serine hydroxymethyltransferase from Sorangium cellulosum (strain So ce56) (Polyangium cellulosum (strain So ce56)).